The following is an 89-amino-acid chain: Small ribosomal subunit protein uS15 (89 aa).

The protein belongs to the universal ribosomal protein uS15 family. As to quaternary structure, part of the 30S ribosomal subunit. Forms a bridge to the 50S subunit in the 70S ribosome, contacting the 23S rRNA.

In terms of biological role, one of the primary rRNA binding proteins, it binds directly to 16S rRNA where it helps nucleate assembly of the platform of the 30S subunit by binding and bridging several RNA helices of the 16S rRNA. Forms an intersubunit bridge (bridge B4) with the 23S rRNA of the 50S subunit in the ribosome. The sequence is that of Small ribosomal subunit protein uS15 from Orientia tsutsugamushi (strain Ikeda) (Rickettsia tsutsugamushi).